The following is a 306-amino-acid chain: Methionyl-tRNA formyltransferase (306 aa).

110-113 (SLLP) serves as a coordination point for (6S)-5,6,7,8-tetrahydrofolate.

This sequence belongs to the Fmt family.

The catalysed reaction is L-methionyl-tRNA(fMet) + (6R)-10-formyltetrahydrofolate = N-formyl-L-methionyl-tRNA(fMet) + (6S)-5,6,7,8-tetrahydrofolate + H(+). Its function is as follows. Attaches a formyl group to the free amino group of methionyl-tRNA(fMet). The formyl group appears to play a dual role in the initiator identity of N-formylmethionyl-tRNA by promoting its recognition by IF2 and preventing the misappropriation of this tRNA by the elongation apparatus. The chain is Methionyl-tRNA formyltransferase from Brucella suis biovar 1 (strain 1330).